Here is a 997-residue protein sequence, read N- to C-terminus: MEKQKPFTLFVPPRLSSSQVSAVKPQTAGGDSNYFKTVNKCTEGDFGVPLTMSSLSKNRENIDTDPAFQKLSILPMLEQVANSGSCHYQEGVNDSDFENSEPMSRLYSKLYKEAEKIKKWKVSIESELKQKENKLQENRKIIEAQRKAIQELQFENEKVSLKLEEEIQENKDLIKENNATRHWCNLLKETCARSAEKTSKYEYEREETRQVYVDLNNNIEKMILAFEELRVQAENARLEMHFKLKEDHEKIQHLEEEYQKEVNNKENQVSLLLIQSTEKENKMKDLTFLLEESRDKANQLEEKTKLQDENLKELNEKKDHLTSELEDIKMSMQRSMSTQKTLEEDLQIATKTIYQLTEEKEAQMEELNKAKTTHSLVVTELKATTCTLEELLRTEQQRLENNEDQLKLITMELQKKSSELEEMTKFKNNKEVELEELKTILAEDQKLLDEKKQVEKLAEELQGKEQELTFLLQTREKEIHDLEVQVTVTKTSEEHYLKQVEEMKTELEKEKLKNIELTANSDMLLLENKKLVQEASDMVLELKKHQEDIINCKKQEERMLKQIETLEEKEMNLRDELESVRKEFIQQGDEVKCKLDKSEENARSIEYEVLKKEKQMKILENKCNNLKKQIENKSKNIEELHQENKALKKKSSAENKQLNAYEIKVNKLELELASTKQKFEEMINNYQKEIEIKKISEEKLLGEVEKAKATVDEAVKLQKEIDLRCQHKIAEMVALMEKHKHQYDKIVEERDSELGLYKNREQEQSSAKVALETELSNIRNELVSLKKQLEVEKEEKEKLKMEQENTAILTDKKDKKIQASLLESPEATSWKFDSKTTPSQNISRLSSSMDSGKSKDNRDSLRASAKSILSTTVTKEYTVKTPTKKSIYQRENKYLPTGGSNKKRKTVFEFDVNSDSSETTDLLSLVSEEDISNRIYNNNTPDSHLLVKTPKQTPLSLSTPASFTKFGSLKKMREDRWATIAKIDRKRRLKEAEKLFT.

The Mediates head to head self-assembly of N-terminal ends signature appears at 102-112; it reads PMSRLYSKLYK. A Nuclear localization signal motif is present at residues 118 to 121; that stretch reads KKWK. Coiled coils occupy residues 121–176 and 212–696; these read KVSI…LIKE and YVDL…KKIS. The segment at 207–363 is interaction with SYCE3; sequence ETRQVYVDLN…YQLTEEKEAQ (157 aa). The interval 698–792 is required for pH-induced assembly of C-terminal ends into antiparallel tetramers; that stretch reads EKLLGEVEKA…VSLKKQLEVE (95 aa). The short motif at 701-704 is the Nuclear localization signal element; that stretch reads LGEV. A coiled-coil region spans residues 768-806; the sequence is KVALETELSNIRNELVSLKKQLEVEKEEKEKLKMEQENT. Residues 805–997 are DNA-binding; sequence NTAILTDKKD…RLKEAEKLFT (193 aa). Position 824 is a phosphoserine (S824). The disordered stretch occupies residues 828–863; it reads TSWKFDSKTTPSQNISRLSSSMDSGKSKDNRDSLRA. The span at 835–851 shows a compositional bias: polar residues; the sequence is KTTPSQNISRLSSSMDS. A compositionally biased stretch (basic and acidic residues) spans 852-861; it reads GKSKDNRDSL. Residues 902–905 carry the Nuclear localization signal motif; the sequence is KKRK. Residue T940 is modified to Phosphothreonine.

In terms of assembly, structural component of synaptonemal complexes. Homotetramer that consists of an N-terminal four-helical bundle that bifurcates into two elongated C-terminal dimeric coiled coils. This tetrameric building block potentially self-assembles into a supramolecular zipper-like lattice to mediate meiotic chromosome synapsis. Self-assembly is likely initiated by local proton density at chromosome axis, which is predicted to trigger antiparallel back to back assembly of adjacent C-terminal ends into tetrameric structures that anchor to chromosomal DNA. Then the N-terminal ends are predicted to undergo cooperative antiparallel head to head assembly at the midline of synaptonemal complexes central element to form a zipper-like lattice between properly aligned homologous chromosomes. The nascent synapsis generated by SYCP1 is stabilized through interaction with central element proteins SYCE1 and SYCE2. Interacts (via tetrameric core) with SYCE3; the interaction remodels SYCP1 homotetramers to 2:1 heterotrimers with SYCE3. SYCP1/SYCE3 heterotrimers form lattice assemblies as part of the mature synaptonemal complex via both lateral and head-to-head interactions. Forms a complex with EWSR1, PRDM9, SYCP3 and REC8; complex formation is dependent of phosphorylated form of REC8 and requires PRDM9 bound to hotspot DNA; EWSR1 joins PRDM9 with the chromosomal axis through REC8. Interacts with SPO16. In terms of tissue distribution, testis.

Its subcellular location is the nucleus. It is found in the chromosome. It localises to the centromere. Functionally, major component of the transverse filaments of synaptonemal complexes, formed between homologous chromosomes during meiotic prophase. Required for normal assembly of the central element of the synaptonemal complexes. Required for normal centromere pairing during meiosis. Required for normal meiotic chromosome synapsis during oocyte and spermatocyte development and for normal male and female fertility. This chain is Synaptonemal complex protein 1, found in Rattus norvegicus (Rat).